Consider the following 161-residue polypeptide: Kininogen-2 (161 aa).

The first 23 residues, 1-23, serve as a signal peptide directing secretion; it reads MRLWFCLSFFVVLCLEHFPGTLA. Residues Cys-150 and Cys-156 are joined by a disulfide bond. Val-160 is subject to Valine amide.

It belongs to the bradykinin-related peptide family. In terms of tissue distribution, expressed by the skin glands.

Its subcellular location is the secreted. Functionally, inhibits ACE with a Ki of 1.6 uM, and targets B2 bradykinin receptor (BDKRB2). Provokes contraction of smooth muscle preparation (ileum). In vivo, induces an early hyperalgesic effects in living rats after intraplantar injection. Its function is as follows. Inhibits the bradykinin-induced in vitro relaxation of rat arterial smooth muscle and constriction of intestinal smooth muscle. May target bradykinin receptors (BDKRB). This chain is Kininogen-2, found in Bombina orientalis (Oriental fire-bellied toad).